The sequence spans 513 residues: MQLNSTEISELIKKRIAQFDVVSEARNTGTIVSVSDGIIRIHGLSDVMQGEMIALPGNRYAMALNLERDSVGAVVMGPYADLAEGMEVQCTGRILEVPVGRGLLGRVVNTLGQPIDGKGEIENDGFSPVEVIAPGVIDRRSVDQPVQTGYKAVDSMVPIGRGQRELIIGDRQTGKTALAIDAIINQRNSGIKCIYVAIGQKASTIANVVRKLEEHGALANTIVVAASASESAALQYLAPYAGCAMGEYFRDRGEDALIVYDDLSKQAVAYRQISLLLRRPPGREAYPGDVFYLHSRLLERASRVNEDYVEKFTKGEVKGKTGSLTALPIIETQAGDVSAFVPTNVISITDGQIFLESNLFNSGIRPAVNPGISVSRVGGSAQTKVIKKLAGGIRTALAQYRELAAFAQFASDLDDATRKQLSHGEKVTELLKQKQFAPLSVAEQAVVLFAVEFGYLDDVELSKIASFETALLDYSNRNHAEFMQELNKTGNYNDEIKDTLKGILDSFKANSAW.

An ATP-binding site is contributed by 169–176 (GDRQTGKT).

Belongs to the ATPase alpha/beta chains family. F-type ATPases have 2 components, CF(1) - the catalytic core - and CF(0) - the membrane proton channel. CF(1) has five subunits: alpha(3), beta(3), gamma(1), delta(1), epsilon(1). CF(0) has three main subunits: a(1), b(2) and c(9-12). The alpha and beta chains form an alternating ring which encloses part of the gamma chain. CF(1) is attached to CF(0) by a central stalk formed by the gamma and epsilon chains, while a peripheral stalk is formed by the delta and b chains.

The protein localises to the cell inner membrane. The catalysed reaction is ATP + H2O + 4 H(+)(in) = ADP + phosphate + 5 H(+)(out). In terms of biological role, produces ATP from ADP in the presence of a proton gradient across the membrane. The alpha chain is a regulatory subunit. The polypeptide is ATP synthase subunit alpha (Haemophilus influenzae (strain PittEE)).